The primary structure comprises 240 residues: Serine protease SplB (240 aa).

An N-terminal signal peptide occupies residues 1 to 36 (MNKNVVIKSLAALTILTSVTGIGTTLVEEVQQTAKA). Residues His-75, Asp-113, and Ser-193 each act as charge relay system in the active site.

The protein belongs to the peptidase S1B family.

It is found in the secreted. Functionally, serine protease that cleaves specifically after the sequence Trp-Glu-Leu-Gln. The protein is Serine protease SplB (splB) of Staphylococcus aureus (strain USA300).